A 118-amino-acid chain; its full sequence is Iron-sulfur cluster insertion protein ErpA (118 aa).

Iron-sulfur cluster-binding residues include cysteine 46, cysteine 110, and cysteine 112.

The protein belongs to the HesB/IscA family. As to quaternary structure, homodimer. The cofactor is iron-sulfur cluster.

Required for insertion of 4Fe-4S clusters for at least IspG. This is Iron-sulfur cluster insertion protein ErpA from Psychromonas ingrahamii (strain DSM 17664 / CCUG 51855 / 37).